Here is a 1136-residue protein sequence, read N- to C-terminus: Nitric oxide synthase, inducible (1136 aa).

Zn(2+) contacts are provided by C107 and C112. Residue C197 coordinates heme b. L-arginine contacts are provided by Q260, W369, Y370, and E374. Positions 378, 459, 460, and 473 each coordinate (6R)-L-erythro-5,6,7,8-tetrahydrobiopterin. A heme b-binding site is contributed by Y488. Residues L512 to A532 are calmodulin-binding. The 139-residue stretch at V536–F674 folds into the Flavodoxin-like domain. The FMN site is built by T542, E543, T544, K546, S547, S588, T589, S625, C632, E658, and Q662. An FAD-binding FR-type domain is found at K727 to P967. R747 lines the NADP(+) pocket. Positions 769, 903, 905, 906, 921, 923, 927, 940, 941, and 942 each coordinate FAD. Residues T981, R1014, S1043, R1044, K1050, Y1052, Q1054, and D1087 each contribute to the NADP(+) site.

Belongs to the NOS family. In terms of assembly, homodimer. The cofactor is heme b. FAD is required as a cofactor. Requires FMN as cofactor. It depends on (6R)-L-erythro-5,6,7,8-tetrahydrobiopterin as a cofactor.

It localises to the cytoplasm. The protein resides in the cytosol. The enzyme catalyses 2 L-arginine + 3 NADPH + 4 O2 + H(+) = 2 L-citrulline + 2 nitric oxide + 3 NADP(+) + 4 H2O. Its activity is regulated as follows. Not stimulated by calcium/calmodulin. Functionally, produces nitric oxide (NO) which is a messenger molecule with diverse functions throughout the body. NO may serve as both a paracrine and autocrine signal for modulating osteoclast bone resorption. Also has nitrosylase activity and mediates cysteine S-nitrosylation of cytoplasmic target proteins such COX2. This Gallus gallus (Chicken) protein is Nitric oxide synthase, inducible (NOS2).